A 185-amino-acid chain; its full sequence is Peptide methionine sulfoxide reductase MsrA (185 aa).

Residue Cys-12 is part of the active site.

It belongs to the MsrA Met sulfoxide reductase family.

The catalysed reaction is L-methionyl-[protein] + [thioredoxin]-disulfide + H2O = L-methionyl-(S)-S-oxide-[protein] + [thioredoxin]-dithiol. It catalyses the reaction [thioredoxin]-disulfide + L-methionine + H2O = L-methionine (S)-S-oxide + [thioredoxin]-dithiol. Has an important function as a repair enzyme for proteins that have been inactivated by oxidation. Catalyzes the reversible oxidation-reduction of methionine sulfoxide in proteins to methionine. The sequence is that of Peptide methionine sulfoxide reductase MsrA from Granulibacter bethesdensis (strain ATCC BAA-1260 / CGDNIH1).